The following is a 337-amino-acid chain: DNA-directed RNA polymerase subunit alpha (337 aa).

Positions 1–233 (MVREKVRVST…DLFIPFLHAE (233 aa)) are alpha N-terminal domain (alpha-NTD). The segment at 267 to 337 (IALKSIFIDQ…KAFHNPFTEE (71 aa)) is alpha C-terminal domain (alpha-CTD).

It belongs to the RNA polymerase alpha chain family. In plastids the minimal PEP RNA polymerase catalytic core is composed of four subunits: alpha, beta, beta', and beta''. When a (nuclear-encoded) sigma factor is associated with the core the holoenzyme is formed, which can initiate transcription.

It localises to the plastid. The protein resides in the chloroplast. The enzyme catalyses RNA(n) + a ribonucleoside 5'-triphosphate = RNA(n+1) + diphosphate. Functionally, DNA-dependent RNA polymerase catalyzes the transcription of DNA into RNA using the four ribonucleoside triphosphates as substrates. The chain is DNA-directed RNA polymerase subunit alpha from Eucalyptus globulus subsp. globulus (Tasmanian blue gum).